The following is a 435-amino-acid chain: Membrane-bound ghrelin O-acyltransferase MBOAT4 (435 aa).

Residues methionine 1–glutamine 5 lie on the Lumenal side of the membrane. Residues phenylalanine 6–phenylalanine 26 traverse the membrane as a helical segment. Over asparagine 27–arginine 40 the chain is Cytoplasmic. Residues tyrosine 41 to methionine 56 form a helical membrane-spanning segment. The Lumenal segment spans residues glycine 57 to tyrosine 59. A helical transmembrane segment spans residues alanine 60–serine 76. Residues leucine 77–valine 82 lie on the Cytoplasmic side of the membrane. The chain crosses the membrane as a helical span at residues histidine 83 to leucine 101. The Lumenal segment spans residues histidine 102–leucine 120. The chain crosses the membrane as a helical span at residues serine 121 to aspartate 136. The Cytoplasmic portion of the chain corresponds to isoleucine 137–threonine 206. Residues tryptophan 207–serine 227 traverse the membrane as a helical segment. At alanine 228 to cysteine 240 the chain is on the lumenal side. The helical transmembrane segment at isoleucine 241–leucine 261 threads the bilayer. At aspartate 262–arginine 324 the chain is on the cytoplasmic side. Catalysis depends on residues asparagine 307 and histidine 338. A helical transmembrane segment spans residues tryptophan 325–histidine 338. Residues glycine 339–leucine 340 lie on the Lumenal side of the membrane. A helical membrane pass occupies residues histidine 341 to alanine 357. The Cytoplasmic portion of the chain corresponds to aspartate 358–leucine 376. A helical membrane pass occupies residues leucine 377 to valine 397. The Lumenal portion of the chain corresponds to glutamate 398 to arginine 407. The helical transmembrane segment at leucine 408–alanine 428 threads the bilayer. The Cytoplasmic segment spans residues arginine 429 to asparagine 435.

This sequence belongs to the membrane-bound acyltransferase family. In terms of assembly, monomer. In terms of processing, not glycosylated.

Its subcellular location is the endoplasmic reticulum membrane. It carries out the reaction octanoyl-CoA + L-seryl-[protein] = O-octanoyl-L-seryl-[protein] + CoA. The catalysed reaction is decanoyl-CoA + L-seryl-[protein] = O-decanoyl-L-seryl-[protein] + CoA. It catalyses the reaction L-seryl-[protein] + acetyl-CoA = O-acetyl-L-seryl-[protein] + CoA. The enzyme catalyses L-seryl-[protein] + butanoyl-CoA = O-butanoyl-L-seryl-[protein] + CoA. It carries out the reaction pentanoyl-CoA + L-seryl-[protein] = O-pentanoyl-L-seryl-[protein] + CoA. The catalysed reaction is hexanoyl-CoA + L-seryl-[protein] = O-hexanoyl-L-seryl-[protein] + CoA. It catalyses the reaction heptanoyl-CoA + L-seryl-[protein] = O-heptanoyl-L-seryl-[protein] + CoA. The enzyme catalyses nonanoyl-CoA + L-seryl-[protein] = O-nonanoyl-L-seryl-[protein] + CoA. It carries out the reaction L-seryl-[protein] + dodecanoyl-CoA = O-dodecanoyl-L-seryl-[protein] + CoA. The catalysed reaction is L-seryl-[protein] + tetradecanoyl-CoA = O-tetradecanoyl-L-seryl-[protein] + CoA. It catalyses the reaction a fatty acyl-CoA + L-seryl-[protein] = O-fatty acyl-L-seryl-[protein] + CoA. Catalyzes ghrelin acylation at 'Ser-3' using preferentially octanoyl-CoA, hexanoyl-CoA and decanoyl-CoA as acyl-CoA donors leading to ghrelin activity. In vitro uses also acyl-CoA donors of different lengths from short-chain (C2) to long-chain fatty acids (C16) knowing that acyl-CoA donors from butanoyl-CoA (C4) to dodecanoyl-CoA (C12) are more efficient compared to longer acyl-CoA donors, such as myristoyl-CoA (C14) and palmitoyl-CoA (C16) that are not efficient. This Rattus norvegicus (Rat) protein is Membrane-bound ghrelin O-acyltransferase MBOAT4.